Here is a 256-residue protein sequence, read N- to C-terminus: Type II phosphatidylinositol 4,5-bisphosphate 4-phosphatase (256 aa).

Residues 1-10 (MAADGIDERS) show a composition bias toward basic and acidic residues. A disordered region spans residues 1–25 (MAADGIDERSPLISPSSGNVTPTAP). Residues 13–22 (ISPSSGNVTP) show a composition bias toward polar residues. Cys-106 is an active-site residue. The short motif at 106 to 112 (CKDISRR) is the CX5R motif element. Helical transmembrane passes span 191–211 (CCTYITMGMICIFIGVGLTVG) and 226–246 (WAVAYLVGLVCLVRACYWGAI).

It is found in the late endosome membrane. The protein localises to the lysosome membrane. It catalyses the reaction a 1,2-diacyl-sn-glycero-3-phospho-(1D-myo-inositol-4,5-bisphosphate) + H2O = a 1,2-diacyl-sn-glycero-3-phospho-(1D-myo-inositol-5-phosphate) + phosphate. In terms of biological role, catalyzes the hydrolysis of phosphatidylinositol-4,5-bisphosphate (PtdIns-4,5-P2) to phosphatidylinositol-4-phosphate (PtdIns-4-P). This is Type II phosphatidylinositol 4,5-bisphosphate 4-phosphatase from Xenopus laevis (African clawed frog).